The following is a 575-amino-acid chain: Serine/threonine-protein kinase Pink1, mitochondrial (575 aa).

Residues 1 to 51 (MSLLAYTNLLLQNGRIFRYYKKANIKKFIKKIIKLDLKSTPSEASVSRQTF) constitute a mitochondrion transit peptide. Residues 52 to 94 (LSTGLNSVKNAVQLQARKLLINNVLERVTPTLNSDLKKKAAKR) lie on the Mitochondrial intermembrane side of the membrane. The helical transmembrane segment at 95–118 (LFYGDSAPFFALVGVSLASGSGLL) threads the bilayer. Over 119–575 (TKDDELEGIC…KWIQELHIYN (457 aa)) the chain is Cytoplasmic. ATP is bound at residue lysine 193. A phosphoserine; by autocatalysis mark is found at serine 202 and serine 204. Glutamate 214 contributes to the Mg(2+) binding site. At threonine 305 the chain carries Phosphothreonine; by autocatalysis. The Proton acceptor role is filled by aspartate 334. The Mg(2+) site is built by asparagine 339 and aspartate 357.

Belongs to the protein kinase superfamily. Ser/Thr protein kinase family. Requires Mg(2+) as cofactor. Post-translationally, proteolytically cleaved. In healthy cells, the precursor is continuously imported into mitochondria where it is proteolytically cleaved into its short form by the mitochondrial rhomboid protease rho-7 (8231301). The short form is then released into the cytosol where it rapidly undergoes proteasome-dependent degradation. In unhealthy cells, when cellular stress conditions lead to the loss of mitochondrial membrane potential, mitochondrial import is impaired leading to the precursor accumulating on the outer mitochondrial membrane (OMM). In terms of processing, autophosphorylated. Autophosphorylated on Ser-202, which activates kinase activity. Loss of mitochondrial membrane potential results in the precursor accumulating on the outer mitochondrial membrane (OMM) where it is activated by autophosphorylation at Ser-202. Autophosphorylation is sufficient and essential for selective recruitment of park to depolarized mitochondria, likely via Pink1-dependent phosphorylation of polyubiquitin chains. Also autophosphorylated at Ser-204 and Thr-305.

Its subcellular location is the mitochondrion outer membrane. The protein localises to the mitochondrion inner membrane. It is found in the cytoplasm. It localises to the cytosol. It carries out the reaction L-seryl-[protein] + ATP = O-phospho-L-seryl-[protein] + ADP + H(+). The enzyme catalyses L-threonyl-[protein] + ATP = O-phospho-L-threonyl-[protein] + ADP + H(+). Its function is as follows. Acts as a serine/threonine-protein kinase. Exhibits a substrate preference for proline at position P+1 and a general preference at several residues for basic residues such as arginine. Also exhibits moderate preferences for a phosphotyrosine at position P-3 and a tryptophan at P-5. Critical to mitochondrial homeostasis it mediates several pathways that maintain mitochondrial health and function Protects against mitochondrial dysfunction during cellular stress by phosphorylating mitochondrial proteins such as park and likely Drp1, to coordinate mitochondrial quality control mechanisms that remove and replace dysfunctional mitochondrial components. Depending on the severity of mitochondrial damage and/or dysfunction, activity ranges from preventing apoptosis and stimulating mitochondrial biogenesis to regulating mitochondrial dynamics and eliminating severely damaged mitochondria via mitophagy. Appears to be particularly important in maintaining the physiology and function of cells with high energy demands that are undergoing stress or altered metabolic environment, including spermatids, muscle cells and neurons such as the dopaminergic (DA) neurons. Mediates the translocation and activation of park at the outer membrane (OMM) of dysfunctional/depolarized mitochondria. At the OMM of damaged mitochondria, phosphorylates pre-existing polyubiquitin chains, the Pink1-phosphorylated polyubiquitin then recruits park from the cytosol to the OMM where park is fully activated by phosphorylation at 'Ser-94' by Pink1. When cellular stress results in irreversible mitochondrial damage, functions with park to promote the clearance of dysfunctional and/or depolarized mitochondria by selective autophagy (mitophagy). The Pink1-park pathway also promotes fission and/or inhibits fusion of damaged mitochondria, by phosphorylating and thus promoting the park-dependent degradation of proteins involved in mitochondrial fusion/fission such as Marf, Opa1 and fzo. This prevents the refusion of unhealthy mitochondria with the mitochondrial network or initiates mitochondrial fragmentation facilitating their later engulfment by autophagosomes. Also likely to promote mitochondrial fission independently of park and Atg7-mediated mitophagy, via the phosphorylation and activation of Drp1. Regulates motility of damaged mitochondria by phosphorylating Miro which likely promotes its park-dependent degradation by the proteasome; in motor neurons, this inhibits mitochondrial intracellular anterograde transport along the axons which probably increases the chance of the mitochondria being eliminated in the soma. The Pink1-park pathway is also involved in mitochondrial regeneration processes such as promoting mitochondrial biogenesis, activating localized mitochondrial repair, promoting selective turnover of mitochondrial proteins and initiating the mitochondrial import of endogenous proteins. Involved in mitochondrial biogenesis by promoting the park-dependent ubiquitination of transcriptional repressor Paris which leads to its subsequent proteasomal degradation and allows activation of the transcription factor srl. Functions with park to promote localized mitochondrial repair by activating the translation of specific nuclear-encoded mitochondrial RNAs (nc-mtRNAs) on the mitochondrial surface, including several key electron transport chain component nc-mtRNAs. During oogenesis, phosphorylates and inactivates larp on the membrane of defective mitochondria, thus impairing local translation and mtDNA replication and consequently, reducing transmission of deleterious mtDNA mutations to the mature oocyte. Phosphorylates the mitochondrial acyl-CoA dehydrogenase Mcad, and appears to be important for maintaining fatty acid and amino acid metabolism via a mechanism that is independent of it's role in maintaining production of ATP. The sequence is that of Serine/threonine-protein kinase Pink1, mitochondrial from Pediculus humanus subsp. corporis (Body louse).